Reading from the N-terminus, the 229-residue chain is Uracil-DNA glycosylase (229 aa).

Aspartate 64 acts as the Proton acceptor in catalysis.

Belongs to the uracil-DNA glycosylase (UDG) superfamily. UNG family. Monomer.

The protein resides in the cytoplasm. It carries out the reaction Hydrolyzes single-stranded DNA or mismatched double-stranded DNA and polynucleotides, releasing free uracil.. Functionally, excises uracil residues from the DNA which can arise as a result of misincorporation of dUMP residues by DNA polymerase or due to deamination of cytosine. The sequence is that of Uracil-DNA glycosylase from Escherichia coli O157:H7.